A 72-amino-acid polypeptide reads, in one-letter code: MAVEKTNASSSLVEVIDRILDKGVCIDAWARVSLVGIELLAIEARVVVASVDTFLKYAEAVGLTTTATAMHA.

It belongs to the gas vesicle GvpA family. As to quaternary structure, the gas vesicle shell is 2 nm thick and consists of a single layer of this protein. It forms helical ribs nearly perpendicular to the long axis of the vesicle.

Its subcellular location is the gas vesicle shell. Its function is as follows. Gas vesicles are hollow, gas filled proteinaceous nanostructures found in some microorganisms. During planktonic growth they allow positioning of the organism at a favorable depth for light or nutrient acquisition. GvpA forms the protein shell. This Geotalea uraniireducens (strain Rf4) (Geobacter uraniireducens) protein is Gas vesicle protein A.